Reading from the N-terminus, the 356-residue chain is Phospho-N-acetylmuramoyl-pentapeptide-transferase (356 aa).

9 consecutive transmembrane segments (helical) span residues 27–47 (AAAI…IGWM), 74–94 (MGGL…MDFA), 97–117 (YVWA…IDDY), 128–148 (VSGK…CYLI), 164–184 (PVID…VGTA), 201–221 (VIIA…AVFA), 241–261 (AIIG…AIFM), 284–304 (IVLG…IIQV), and 333–353 (TVVI…LATL).

The protein belongs to the glycosyltransferase 4 family. MraY subfamily. Mg(2+) serves as cofactor.

Its subcellular location is the cell inner membrane. It carries out the reaction UDP-N-acetyl-alpha-D-muramoyl-L-alanyl-gamma-D-glutamyl-meso-2,6-diaminopimeloyl-D-alanyl-D-alanine + di-trans,octa-cis-undecaprenyl phosphate = di-trans,octa-cis-undecaprenyl diphospho-N-acetyl-alpha-D-muramoyl-L-alanyl-D-glutamyl-meso-2,6-diaminopimeloyl-D-alanyl-D-alanine + UMP. Its pathway is cell wall biogenesis; peptidoglycan biosynthesis. Catalyzes the initial step of the lipid cycle reactions in the biosynthesis of the cell wall peptidoglycan: transfers peptidoglycan precursor phospho-MurNAc-pentapeptide from UDP-MurNAc-pentapeptide onto the lipid carrier undecaprenyl phosphate, yielding undecaprenyl-pyrophosphoryl-MurNAc-pentapeptide, known as lipid I. The polypeptide is Phospho-N-acetylmuramoyl-pentapeptide-transferase (Zymomonas mobilis subsp. mobilis (strain ATCC 31821 / ZM4 / CP4)).